Reading from the N-terminus, the 143-residue chain is MLTIQEIMAIIPHRYPFLLIDRILELEPGQRAVGEKLVTIGEPYFQGHFPNRPIMPGVLIVEALAQTGAVAALSLPENRGKMAFFAGIDGVRFRKPVYPGDTLRLEVRFDKMRRGIGKGTGVATVNGQLVCEGELMFALSSEG.

The active site involves His-48.

Belongs to the thioester dehydratase family. FabZ subfamily.

The protein resides in the cytoplasm. It catalyses the reaction a (3R)-hydroxyacyl-[ACP] = a (2E)-enoyl-[ACP] + H2O. In terms of biological role, involved in unsaturated fatty acids biosynthesis. Catalyzes the dehydration of short chain beta-hydroxyacyl-ACPs and long chain saturated and unsaturated beta-hydroxyacyl-ACPs. This is 3-hydroxyacyl-[acyl-carrier-protein] dehydratase FabZ from Roseiflexus sp. (strain RS-1).